The sequence spans 383 residues: Peroxisomal membrane protein PEX15 (383 aa).

Residues 1–331 lie on the Cytoplasmic side of the membrane; that stretch reads MAASEIMNNL…AVLKHHFTRS (331 aa). The chain crosses the membrane as a helical span at residues 332–349; the sequence is VLNKNGLLLTGLLLLLCL. The Lumenal portion of the chain corresponds to 350–383; the sequence is KKYKSLMAIFKHVPAAFHTVYPQIVGLLKLLASI.

Interacts with PEX6. Interacts with PEX19; targets PEX15 to the peroxisome. Phosphorylated.

Its subcellular location is the peroxisome membrane. It is found in the endoplasmic reticulum membrane. Its function is as follows. Peroxisomal docking factor that anchors PEX1 and PEX6 to peroxisome membranes. PEX26 is therefore required for the formation of the PEX1-PEX6 AAA ATPase complex, a complex that mediates the extraction of the PEX5 receptor from peroxisomal membrane. This chain is Peroxisomal membrane protein PEX15 (PEX15), found in Saccharomyces cerevisiae (strain ATCC 204508 / S288c) (Baker's yeast).